The primary structure comprises 336 residues: Flavonoid 4'-O-methyltransferase 5 (336 aa).

S-adenosyl-L-methionine is bound by residues Tyr140 and Asp203. Catalysis depends on His241, which acts as the Proton acceptor.

The protein belongs to the class I-like SAM-binding methyltransferase superfamily. Cation-independent O-methyltransferase family. As to quaternary structure, homodimer. In terms of tissue distribution, expressed in leaves.

It carries out the reaction genkwanin + S-adenosyl-L-methionine = apigenin 4',7-dimethyl ether + S-adenosyl-L-homocysteine. It catalyses the reaction cirsiliol + S-adenosyl-L-methionine = eupatorin + S-adenosyl-L-homocysteine + H(+). The catalysed reaction is cirsimaritin + S-adenosyl-L-methionine = salvigenin + S-adenosyl-L-homocysteine + H(+). The enzyme catalyses scutellarein 7-methyl ether + S-adenosyl-L-methionine = ladanein + S-adenosyl-L-homocysteine + H(+). It carries out the reaction (2S)-sakuranetin + S-adenosyl-L-methionine = (2S)-naringenin 4',7-dimethyl ether + S-adenosyl-L-homocysteine + H(+). Its pathway is flavonoid metabolism. Substrate inhibition by genkwanin (GENK) at concentrations above 10 mM. Flavonoid 4'-O-methyltransferase involved in the biosynthesis of polymethoxylated flavonoids natural products such as nevadensin and salvigenin, aroma compounds which contribute to the flavor of sweet basil, and exhibit pharmacological activities such as anti-allergic, anti-oxidant, antibacterial, anti-proliferative, and anti-inflammatory effects. Catalyzes S-adenosylmethionine-dependent regioselective 4'-O-methylation of flavonoids; active on various hydroxylated flavonoid substrates, including scutellarein-7-methyl ether (SCU7Me) and, with a lower efficiency, cirsimaritin (CIRM), sakuranetin (NAR7Me), ladanein (LAD) and genkwanin (GENK). The sequence is that of Flavonoid 4'-O-methyltransferase 5 from Ocimum basilicum (Sweet basil).